The sequence spans 361 residues: Phospho-N-acetylmuramoyl-pentapeptide-transferase (361 aa).

A run of 10 helical transmembrane segments spans residues Gly27–Leu47, Thr72–Ala92, Tyr98–Phe118, Leu135–Glu155, Thr169–Ala189, Gly200–Val220, Ile240–Pro260, Ala263–Val283, Ile289–Val309, and Gln338–Leu358.

The protein belongs to the glycosyltransferase 4 family. MraY subfamily. Requires Mg(2+) as cofactor.

The protein localises to the cell inner membrane. It carries out the reaction UDP-N-acetyl-alpha-D-muramoyl-L-alanyl-gamma-D-glutamyl-meso-2,6-diaminopimeloyl-D-alanyl-D-alanine + di-trans,octa-cis-undecaprenyl phosphate = di-trans,octa-cis-undecaprenyl diphospho-N-acetyl-alpha-D-muramoyl-L-alanyl-D-glutamyl-meso-2,6-diaminopimeloyl-D-alanyl-D-alanine + UMP. It participates in cell wall biogenesis; peptidoglycan biosynthesis. Its function is as follows. Catalyzes the initial step of the lipid cycle reactions in the biosynthesis of the cell wall peptidoglycan: transfers peptidoglycan precursor phospho-MurNAc-pentapeptide from UDP-MurNAc-pentapeptide onto the lipid carrier undecaprenyl phosphate, yielding undecaprenyl-pyrophosphoryl-MurNAc-pentapeptide, known as lipid I. The chain is Phospho-N-acetylmuramoyl-pentapeptide-transferase from Dinoroseobacter shibae (strain DSM 16493 / NCIMB 14021 / DFL 12).